An 89-amino-acid chain; its full sequence is MKTSVMFMLVFVISLMCSSEAQEVARTYCGRHLADTLADLCFGVEKRSGAQYAPYFWTRQYLGSRGKRGVVDECCFRPCTLDVLLSYCG.

The first 19 residues, 1–19 (MKTSVMFMLVFVISLMCSS), serve as a signal peptide directing secretion. 3 cysteine pairs are disulfide-bonded: Cys-29–Cys-75, Cys-41–Cys-88, and Cys-74–Cys-79. A propeptide spans 48–66 (SGAQYAPYFWTRQYLGSRG) (c peptide like).

This sequence belongs to the insulin family. Heterodimer of a B chain and an A chain linked by two disulfide bonds.

It is found in the secreted. Functionally, brain peptide responsible for activation of prothoracic glands to produce ecdysone in insects. The chain is Bombyxin B-2 (BBXB2) from Bombyx mori (Silk moth).